The chain runs to 568 residues: Small ribosomal subunit protein bS1 (568 aa).

S1 motif domains are found at residues 39–100 (KTVV…LSRE), 118–184 (GEFV…VSRR), 205–273 (GMVL…LGIK), 290–360 (GKQM…LSIK), 377–447 (GTII…LGIK), and 464–533 (GTIV…LSVK).

The protein belongs to the bacterial ribosomal protein bS1 family.

Binds mRNA; thus facilitating recognition of the initiation point. It is needed to translate mRNA with a short Shine-Dalgarno (SD) purine-rich sequence. The chain is Small ribosomal subunit protein bS1 (rpsA) from Rickettsia conorii (strain ATCC VR-613 / Malish 7).